We begin with the raw amino-acid sequence, 148 residues long: Large ribosomal subunit protein bL9 (148 aa).

It belongs to the bacterial ribosomal protein bL9 family.

Functionally, binds to the 23S rRNA. In Dechloromonas aromatica (strain RCB), this protein is Large ribosomal subunit protein bL9.